The following is a 345-amino-acid chain: Methylthioribose-1-phosphate isomerase (345 aa).

Substrate-binding positions include 47-49 (RGA), Arg-90, and Gln-197. Residue Asp-238 is the Proton donor of the active site. 248-249 (NK) lines the substrate pocket.

It belongs to the eIF-2B alpha/beta/delta subunits family. MtnA subfamily.

It catalyses the reaction 5-(methylsulfanyl)-alpha-D-ribose 1-phosphate = 5-(methylsulfanyl)-D-ribulose 1-phosphate. It participates in amino-acid biosynthesis; L-methionine biosynthesis via salvage pathway; L-methionine from S-methyl-5-thio-alpha-D-ribose 1-phosphate: step 1/6. Catalyzes the interconversion of methylthioribose-1-phosphate (MTR-1-P) into methylthioribulose-1-phosphate (MTRu-1-P). This chain is Methylthioribose-1-phosphate isomerase, found in Thermoanaerobacter pseudethanolicus (strain ATCC 33223 / 39E) (Clostridium thermohydrosulfuricum).